The following is a 362-amino-acid chain: MSATRRIVLGLIPADGIGKEVVPAARRLMENLPAKHKLKFDFIDLDAGWGTFERTGKALPERTVERLKTECNAALFGAVQSPTHKVAGYSSPIVALRKKMGLYANVRPVKSLDGAKGKPVDLVIVRENTECLYVKEERMVQNTPGKRVAEAIRRISEEASTKIGKMAFEIAKSRQKIRESGTYSIHKKPLVTIIHKSNVMSVTDGLFRESCRHAQSLDPSYASINVDEQIVDSMVYRLFREPECFDVVVAPNLYGDILSDGAASLIGSLGLVPSANVGDNFVMSEPVHGSAPDIAGRGIANPVATFRSVALMLEFMGHQDAAADIYTAVDKVLTEGKVLTPDLGGKSGTNEITDAVLANIHN.

79 to 81 provides a ligand contact to NADH; that stretch reads VQS. Ser-81 provides a ligand contact to (2R,3S)-homoisocitrate. Phosphoserine is present on residues Ser-81 and Ser-91. The (2R,3S)-homoisocitrate site is built by Arg-97, Arg-107, Arg-126, Tyr-133, Lys-196, and Asn-198. Position 198 (Asn-198) interacts with NADH. Mg(2+) contacts are provided by Asp-232, Asp-256, and Asp-260. NADH is bound by residues 289–293 and Asn-301; that span reads GSAPD.

It belongs to the isocitrate and isopropylmalate dehydrogenases family. Mg(2+) is required as a cofactor.

It is found in the cytoplasm. The catalysed reaction is (2R,3S)-homoisocitrate + NAD(+) = 2-oxoadipate + CO2 + NADH. The protein operates within amino-acid biosynthesis; L-lysine biosynthesis via AAA pathway; L-alpha-aminoadipate from 2-oxoglutarate: step 4/5. The sequence is that of Homoisocitrate dehydrogenase (lys12) from Schizosaccharomyces pombe (strain 972 / ATCC 24843) (Fission yeast).